A 426-amino-acid polypeptide reads, in one-letter code: D-amino acid dehydrogenase (426 aa).

3–17 serves as a coordination point for FAD; sequence VVVLGAGVIGVTTAW.

The protein belongs to the DadA oxidoreductase family. FAD is required as a cofactor.

It carries out the reaction a D-alpha-amino acid + A + H2O = a 2-oxocarboxylate + AH2 + NH4(+). It participates in amino-acid degradation; D-alanine degradation; NH(3) and pyruvate from D-alanine: step 1/1. In terms of biological role, oxidative deamination of D-amino acids. The chain is D-amino acid dehydrogenase from Phenylobacterium zucineum (strain HLK1).